Reading from the N-terminus, the 311-residue chain is Ribosomal RNA small subunit methyltransferase H (311 aa).

S-adenosyl-L-methionine-binding positions include 32 to 34 (AGH), D52, F79, D100, and Q107. Residues 289-298 (SKEELEENNR) are compositionally biased toward basic and acidic residues. The tract at residues 289 to 311 (SKEELEENNRARSAKLRIAEKRK) is disordered. Residues 300–311 (RSAKLRIAEKRK) are compositionally biased toward basic residues.

It belongs to the methyltransferase superfamily. RsmH family.

Its subcellular location is the cytoplasm. The catalysed reaction is cytidine(1402) in 16S rRNA + S-adenosyl-L-methionine = N(4)-methylcytidine(1402) in 16S rRNA + S-adenosyl-L-homocysteine + H(+). Specifically methylates the N4 position of cytidine in position 1402 (C1402) of 16S rRNA. This is Ribosomal RNA small subunit methyltransferase H from Bacillus velezensis (strain DSM 23117 / BGSC 10A6 / LMG 26770 / FZB42) (Bacillus amyloliquefaciens subsp. plantarum).